The primary structure comprises 64 residues: Large ribosomal subunit protein bL32 (64 aa).

Residues 1-10 (MAVPKRKTTP) are compositionally biased toward basic residues. Positions 1 to 22 (MAVPKRKTTPSKRDMRRANHDK) are disordered. Positions 11–22 (SKRDMRRANHDK) are enriched in basic and acidic residues.

It belongs to the bacterial ribosomal protein bL32 family.

The chain is Large ribosomal subunit protein bL32 from Sorangium cellulosum (strain So ce56) (Polyangium cellulosum (strain So ce56)).